The primary structure comprises 33 residues: Protamine (33 aa).

Residues 1 to 33 are disordered; the sequence is MPRRRRSSSRPVRRRRRPRVSRRRRRRGGRRRR.

Testis.

The protein localises to the nucleus. It is found in the chromosome. Its function is as follows. Protamines substitute for histones in the chromatin of sperm during the haploid phase of spermatogenesis. They compact sperm DNA into a highly condensed, stable and inactive complex. This is Protamine from Oncorhynchus keta (Chum salmon).